A 288-amino-acid chain; its full sequence is Formamidopyrimidine-DNA glycosylase (288 aa).

The active-site Schiff-base intermediate with DNA is P2. E3 serves as the catalytic Proton donor. The active-site Proton donor; for beta-elimination activity is K58. DNA contacts are provided by H101, R124, and R169. The FPG-type zinc-finger motif lies at 254-288 (LVYDRAGLPCRVCGTPIRQIVQGQRSTFYCPACQR). R278 functions as the Proton donor; for delta-elimination activity in the catalytic mechanism.

The protein belongs to the FPG family. Monomer. Requires Zn(2+) as cofactor.

It catalyses the reaction Hydrolysis of DNA containing ring-opened 7-methylguanine residues, releasing 2,6-diamino-4-hydroxy-5-(N-methyl)formamidopyrimidine.. The enzyme catalyses 2'-deoxyribonucleotide-(2'-deoxyribose 5'-phosphate)-2'-deoxyribonucleotide-DNA = a 3'-end 2'-deoxyribonucleotide-(2,3-dehydro-2,3-deoxyribose 5'-phosphate)-DNA + a 5'-end 5'-phospho-2'-deoxyribonucleoside-DNA + H(+). Its function is as follows. Involved in base excision repair of DNA damaged by oxidation or by mutagenic agents. Acts as a DNA glycosylase that recognizes and removes damaged bases. Has a preference for oxidized purines, such as 7,8-dihydro-8-oxoguanine (8-oxoG). Has AP (apurinic/apyrimidinic) lyase activity and introduces nicks in the DNA strand. Cleaves the DNA backbone by beta-delta elimination to generate a single-strand break at the site of the removed base with both 3'- and 5'-phosphates. The protein is Formamidopyrimidine-DNA glycosylase of Ralstonia nicotianae (strain ATCC BAA-1114 / GMI1000) (Ralstonia solanacearum).